The sequence spans 242 residues: Probable transcriptional regulatory protein LBA0733 (242 aa).

A disordered region spans residues 1–22 (MSGHSKWHNIQGRKNAQDAKRG).

Belongs to the TACO1 family.

The protein resides in the cytoplasm. This Lactobacillus acidophilus (strain ATCC 700396 / NCK56 / N2 / NCFM) protein is Probable transcriptional regulatory protein LBA0733.